Here is a 372-residue protein sequence, read N- to C-terminus: Mitogen-activated protein kinase homolog NTF3 (372 aa).

The Protein kinase domain maps to 32 to 319; that stretch reads YVPIKPIGRG…VIEALQHPYM (288 aa). ATP-binding positions include 38–46 and Lys-61; that span reads IGRGAYGIV. Asp-158 acts as the Proton acceptor in catalysis. Thr-191 is modified (phosphothreonine). Positions 191–193 match the TXY motif; it reads TEY. Phosphotyrosine is present on Tyr-193.

This sequence belongs to the protein kinase superfamily. CMGC Ser/Thr protein kinase family. MAP kinase subfamily. Mg(2+) is required as a cofactor. In terms of processing, dually phosphorylated on Thr-191 and Tyr-193, which activates the enzyme. Very low autophosphorylation, although dramatically increased when Mn(2+) is added to the reaction instead of Mg(2+). As to expression, ubiquitous.

The catalysed reaction is L-seryl-[protein] + ATP = O-phospho-L-seryl-[protein] + ADP + H(+). The enzyme catalyses L-threonyl-[protein] + ATP = O-phospho-L-threonyl-[protein] + ADP + H(+). With respect to regulation, activated by tyrosine and threonine phosphorylation. The polypeptide is Mitogen-activated protein kinase homolog NTF3 (NTF3) (Nicotiana tabacum (Common tobacco)).